The sequence spans 247 residues: NAD-dependent protein deacetylase (247 aa).

In terms of domain architecture, Deacetylase sirtuin-type spans Met1–Tyr247. 8 residues coordinate NAD(+): Ala23, Thr27, Phe34, Arg35, Gln104, Ile106, Asp107, and His122. Residue Phe34 coordinates nicotinamide. Ile106 and Asp107 together coordinate nicotinamide. The active-site Proton acceptor is the His122. 4 residues coordinate Zn(2+): Cys130, Cys133, Cys152, and Cys155. NAD(+) contacts are provided by Thr193, Ser194, Asn216, and Ile234.

Belongs to the sirtuin family. Class U subfamily. It depends on Zn(2+) as a cofactor.

It is found in the cytoplasm. The enzyme catalyses N(6)-acetyl-L-lysyl-[protein] + NAD(+) + H2O = 2''-O-acetyl-ADP-D-ribose + nicotinamide + L-lysyl-[protein]. In terms of biological role, NAD-dependent protein deacetylase which modulates the activities of several enzymes which are inactive in their acetylated form. This Clostridium tetani (strain Massachusetts / E88) protein is NAD-dependent protein deacetylase.